The chain runs to 336 residues: Dihydroorotate dehydrogenase (quinone) (336 aa).

FMN contacts are provided by residues 62–66 (AGLDK) and Thr86. Lys66 serves as a coordination point for substrate. 111 to 115 (NRMGF) is a substrate binding site. Asn139 and Asn172 together coordinate FMN. Asn172 provides a ligand contact to substrate. Ser175 (nucleophile) is an active-site residue. Asn177 is a binding site for substrate. FMN is bound by residues Lys217 and Thr245. 246–247 (NT) contacts substrate. Residues Gly268, Gly297, and 318–319 (YS) contribute to the FMN site.

Belongs to the dihydroorotate dehydrogenase family. Type 2 subfamily. In terms of assembly, monomer. It depends on FMN as a cofactor.

It localises to the cell membrane. The enzyme catalyses (S)-dihydroorotate + a quinone = orotate + a quinol. It functions in the pathway pyrimidine metabolism; UMP biosynthesis via de novo pathway; orotate from (S)-dihydroorotate (quinone route): step 1/1. In terms of biological role, catalyzes the conversion of dihydroorotate to orotate with quinone as electron acceptor. The polypeptide is Dihydroorotate dehydrogenase (quinone) (Salmonella choleraesuis (strain SC-B67)).